A 275-amino-acid chain; its full sequence is 2,3,4,5-tetrahydropyridine-2,6-dicarboxylate N-succinyltransferase (275 aa).

This sequence belongs to the transferase hexapeptide repeat family.

Its subcellular location is the cytoplasm. The catalysed reaction is (S)-2,3,4,5-tetrahydrodipicolinate + succinyl-CoA + H2O = (S)-2-succinylamino-6-oxoheptanedioate + CoA. Its pathway is amino-acid biosynthesis; L-lysine biosynthesis via DAP pathway; LL-2,6-diaminopimelate from (S)-tetrahydrodipicolinate (succinylase route): step 1/3. This chain is 2,3,4,5-tetrahydropyridine-2,6-dicarboxylate N-succinyltransferase, found in Paraburkholderia phymatum (strain DSM 17167 / CIP 108236 / LMG 21445 / STM815) (Burkholderia phymatum).